A 39-amino-acid chain; its full sequence is Cytochrome b559 subunit beta (39 aa).

The helical transmembrane segment at 14 to 30 (WLAVHGLAIPTVSFLGS) threads the bilayer. His-18 contacts heme.

It belongs to the PsbE/PsbF family. As to quaternary structure, heterodimer of an alpha subunit and a beta subunit. PSII is composed of 1 copy each of membrane proteins PsbA, PsbB, PsbC, PsbD, PsbE, PsbF, PsbH, PsbI, PsbJ, PsbK, PsbL, PsbM, PsbT, PsbX, PsbY, PsbZ, Psb30/Ycf12, at least 3 peripheral proteins of the oxygen-evolving complex and a large number of cofactors. It forms dimeric complexes. It depends on heme b as a cofactor.

Its subcellular location is the plastid. It localises to the chloroplast thylakoid membrane. In terms of biological role, this b-type cytochrome is tightly associated with the reaction center of photosystem II (PSII). PSII is a light-driven water:plastoquinone oxidoreductase that uses light energy to abstract electrons from H(2)O, generating O(2) and a proton gradient subsequently used for ATP formation. It consists of a core antenna complex that captures photons, and an electron transfer chain that converts photonic excitation into a charge separation. The chain is Cytochrome b559 subunit beta from Beta vulgaris (Sugar beet).